The primary structure comprises 60 residues: Cytotoxin 2a (60 aa).

Disulfide bonds link cysteine 3–cysteine 21, cysteine 14–cysteine 38, cysteine 42–cysteine 53, and cysteine 54–cysteine 59.

This sequence belongs to the three-finger toxin family. Short-chain subfamily. Type IA cytotoxin sub-subfamily. As to quaternary structure, monomer in solution; Homodimer and oligomer in the presence of negatively charged lipids forming a pore with a size ranging between 20 and 30 Angstroms. Expressed by the venom gland.

It is found in the secreted. The protein resides in the target cell membrane. Functionally, shows cytolytic activity on many different cells by forming pore in lipid membranes. In vivo, increases heart rate or kills the animal by cardiac arrest. In addition, it binds to heparin with high affinity, interacts with Kv channel-interacting protein 1 (KCNIP1) in a calcium-independent manner, and binds to integrin alpha-V/beta-3 (ITGAV/ITGB3) with moderate affinity. Preferentially binds acidic phospholipids like phosphatidylserine, phosphatidic acid and phosphatidyl glycerol. Has hemolytic activity towards human erythrocytes (EC(50)=1.024 uM) and cytolytic activity towards various cell lines. The chain is Cytotoxin 2a from Naja naja (Indian cobra).